The primary structure comprises 152 residues: Ribosome maturation factor RimP (152 aa).

It belongs to the RimP family.

It is found in the cytoplasm. In terms of biological role, required for maturation of 30S ribosomal subunits. The chain is Ribosome maturation factor RimP from Photorhabdus laumondii subsp. laumondii (strain DSM 15139 / CIP 105565 / TT01) (Photorhabdus luminescens subsp. laumondii).